A 166-amino-acid chain; its full sequence is Urease accessory protein UreE (166 aa).

Positions 132–156 are disordered; that stretch reads FQPEHGAYGGGHHHSRHGDEDFNYP.

The protein belongs to the UreE family.

It is found in the cytoplasm. Functionally, involved in urease metallocenter assembly. Binds nickel. Probably functions as a nickel donor during metallocenter assembly. The polypeptide is Urease accessory protein UreE (Pseudomonas fluorescens (strain ATCC BAA-477 / NRRL B-23932 / Pf-5)).